We begin with the raw amino-acid sequence, 162 residues long: Regulator of sigma D (162 aa).

This sequence belongs to the Rsd/AlgQ family. As to quaternary structure, interacts with RpoD.

Its subcellular location is the cytoplasm. In terms of biological role, binds RpoD and negatively regulates RpoD-mediated transcription activation by preventing the interaction between the primary sigma factor RpoD with the catalytic core of the RNA polymerase and with promoter DNA. May be involved in replacement of the RNA polymerase sigma subunit from RpoD to RpoS during the transition from exponential growth to the stationary phase. The protein is Regulator of sigma D of Salmonella arizonae (strain ATCC BAA-731 / CDC346-86 / RSK2980).